The following is a 471-amino-acid chain: Tryptophanase (471 aa).

K270 is subject to N6-(pyridoxal phosphate)lysine.

It belongs to the beta-eliminating lyase family. Homotetramer. The cofactor is pyridoxal 5'-phosphate.

The catalysed reaction is L-tryptophan + H2O = indole + pyruvate + NH4(+). It functions in the pathway amino-acid degradation; L-tryptophan degradation via pyruvate pathway; indole and pyruvate from L-tryptophan: step 1/1. This Histophilus somni (strain 129Pt) (Haemophilus somnus) protein is Tryptophanase.